The primary structure comprises 333 residues: Biotin synthase (333 aa).

The Radical SAM core domain maps to 51 to 281 (HFGNQVSLCG…DVHITICGGR (231 aa)). [4Fe-4S] cluster contacts are provided by cysteine 69, cysteine 73, and cysteine 76. A [2Fe-2S] cluster-binding site is contributed by cysteine 206.

It belongs to the radical SAM superfamily. Biotin synthase family. In terms of assembly, homodimer. [4Fe-4S] cluster serves as cofactor. It depends on [2Fe-2S] cluster as a cofactor.

It catalyses the reaction (4R,5S)-dethiobiotin + (sulfur carrier)-SH + 2 reduced [2Fe-2S]-[ferredoxin] + 2 S-adenosyl-L-methionine = (sulfur carrier)-H + biotin + 2 5'-deoxyadenosine + 2 L-methionine + 2 oxidized [2Fe-2S]-[ferredoxin]. The protein operates within cofactor biosynthesis; biotin biosynthesis; biotin from 7,8-diaminononanoate: step 2/2. Functionally, catalyzes the conversion of dethiobiotin (DTB) to biotin by the insertion of a sulfur atom into dethiobiotin via a radical-based mechanism. In Trichlorobacter lovleyi (strain ATCC BAA-1151 / DSM 17278 / SZ) (Geobacter lovleyi), this protein is Biotin synthase.